A 712-amino-acid chain; its full sequence is Auxin response factor 15 (712 aa).

Positions 142-244 (FCKTLTASDT…ELRLGVRRAA (103 aa)) form a DNA-binding region, TF-B3.

It belongs to the ARF family. In terms of assembly, homo and heterodimers. In terms of tissue distribution, expressed in roots, culms, leaves and young panicles.

It is found in the nucleus. In terms of biological role, auxin response factors (ARFs) are transcriptional factors that bind specifically to the DNA sequence 5'-TGTCTC-3' found in the auxin-responsive promoter elements (AuxREs). This chain is Auxin response factor 15 (ARF15), found in Oryza sativa subsp. japonica (Rice).